The sequence spans 206 residues: Translocation protein SEC66 (206 aa).

Topologically, residues 1–27 are lumenal; sequence MSEFNETKFSNNGTFFETEEPIVETKS. N-linked (GlcNAc...) asparagine glycosylation is found at Asn5 and Asn12. A helical; Signal-anchor for type II membrane protein membrane pass occupies residues 28 to 48; the sequence is ISVYTPLIYVFILVVSLVMFA. At 49–206 the chain is on the cytoplasmic side; that stretch reads SSYRKKQAKK…KINNDGRLVN (158 aa).

The protein to S.pombe SpBC409.21. As to quaternary structure, component of the heterotetrameric Sec62/63complex composed of SEC62, SEC63, SEC66 and SEC72. The Sec62/63 complex associates with the Sec61 complex to form the Sec complex. Part of a complex consisting of KAR2, SEC63, SEC66 and SEC72.

The protein resides in the endoplasmic reticulum membrane. In terms of biological role, acts as a component of the Sec62/63 complex which is involved in SRP-independent post-translational translocation across the endoplasmic reticulum (ER) and functions together with the Sec61 complex and KAR2 in a channel-forming translocon complex. A cycle of assembly and disassembly of Sec62/63 complex from SEC61 may govern the activity of the translocon. SEC66 is required to attach or retain SEC72 in the SEC63 complex. It is essential for growth at elevated temperatures. In Saccharomyces cerevisiae (strain ATCC 204508 / S288c) (Baker's yeast), this protein is Translocation protein SEC66 (SEC66).